A 426-amino-acid chain; its full sequence is Glucan 1,3-beta-glucosidase (426 aa).

A signal peptide spans 1 to 20 (MLYPRALLPAAVALASLVLA). The Proton donor role is filled by Glu-208. 2 disulfide bridges follow: Cys-290/Cys-416 and Cys-315/Cys-343. Glu-307 (nucleophile) is an active-site residue.

It belongs to the glycosyl hydrolase 5 (cellulase A) family.

It localises to the secreted. The enzyme catalyses Successive hydrolysis of beta-D-glucose units from the non-reducing ends of (1-&gt;3)-beta-D-glucans, releasing alpha-glucose.. In terms of biological role, beta-glucanases participate in the metabolism of beta-glucan, the main structural component of the cell wall. It could also function biosynthetically as a transglycosylase. This Blumeria graminis (Powdery mildew) protein is Glucan 1,3-beta-glucosidase.